The sequence spans 176 residues: N5-carboxyaminoimidazole ribonucleotide mutase (176 aa).

Residues Ser14, Asp17, and Arg44 each coordinate substrate.

It belongs to the AIR carboxylase family. Class I subfamily.

The catalysed reaction is 5-carboxyamino-1-(5-phospho-D-ribosyl)imidazole + H(+) = 5-amino-1-(5-phospho-D-ribosyl)imidazole-4-carboxylate. It participates in purine metabolism; IMP biosynthesis via de novo pathway; 5-amino-1-(5-phospho-D-ribosyl)imidazole-4-carboxylate from 5-amino-1-(5-phospho-D-ribosyl)imidazole (N5-CAIR route): step 2/2. In terms of biological role, catalyzes the conversion of N5-carboxyaminoimidazole ribonucleotide (N5-CAIR) to 4-carboxy-5-aminoimidazole ribonucleotide (CAIR). In Synechocystis sp. (strain ATCC 27184 / PCC 6803 / Kazusa), this protein is N5-carboxyaminoimidazole ribonucleotide mutase.